Reading from the N-terminus, the 349-residue chain is tRNA pseudouridine synthase D (349 aa).

Aspartate 77 acts as the Nucleophile in catalysis. The region spanning 151–309 is the TRUD domain; the sequence is GVPNYFGEQR…ETIDESTLKL (159 aa).

The protein belongs to the pseudouridine synthase TruD family.

The catalysed reaction is uridine(13) in tRNA = pseudouridine(13) in tRNA. In terms of biological role, responsible for synthesis of pseudouridine from uracil-13 in transfer RNAs. The protein is tRNA pseudouridine synthase D of Pseudoalteromonas translucida (strain TAC 125).